The chain runs to 297 residues: 4-hydroxy-tetrahydrodipicolinate synthase (297 aa).

Threonine 51 provides a ligand contact to pyruvate. The active-site Proton donor/acceptor is tyrosine 139. Residue lysine 167 is the Schiff-base intermediate with substrate of the active site. Valine 209 lines the pyruvate pocket.

Belongs to the DapA family. As to quaternary structure, homotetramer; dimer of dimers.

The protein resides in the cytoplasm. The catalysed reaction is L-aspartate 4-semialdehyde + pyruvate = (2S,4S)-4-hydroxy-2,3,4,5-tetrahydrodipicolinate + H2O + H(+). The protein operates within amino-acid biosynthesis; L-lysine biosynthesis via DAP pathway; (S)-tetrahydrodipicolinate from L-aspartate: step 3/4. Functionally, catalyzes the condensation of (S)-aspartate-beta-semialdehyde [(S)-ASA] and pyruvate to 4-hydroxy-tetrahydrodipicolinate (HTPA). The protein is 4-hydroxy-tetrahydrodipicolinate synthase of Albidiferax ferrireducens (strain ATCC BAA-621 / DSM 15236 / T118) (Rhodoferax ferrireducens).